Reading from the N-terminus, the 671-residue chain is Acetyl-coenzyme A synthetase 1 (671 aa).

CoA is bound by residues 210–213 and Thr329; that span reads RGGK. ATP is bound by residues 405–407, 429–434, Asp520, and Arg535; these read GEP and DTYWQT. Residue Ser543 coordinates CoA. Arg546 lines the ATP pocket. Arg605 is a binding site for CoA.

Belongs to the ATP-dependent AMP-binding enzyme family.

It carries out the reaction acetate + ATP + CoA = acetyl-CoA + AMP + diphosphate. This is Acetyl-coenzyme A synthetase 1 (ACS1) from Debaryomyces hansenii (strain ATCC 36239 / CBS 767 / BCRC 21394 / JCM 1990 / NBRC 0083 / IGC 2968) (Yeast).